The sequence spans 292 residues: Diaminopimelate epimerase (292 aa).

Substrate is bound by residues Asn-13, Gln-46, and Asn-66. Cys-75 acts as the Proton donor in catalysis. Substrate contacts are provided by residues 76–77 (GN), Asn-166, Asn-199, and 217–218 (ER). Cys-226 serves as the catalytic Proton acceptor. 227–228 (GT) contributes to the substrate binding site.

It belongs to the diaminopimelate epimerase family. As to quaternary structure, homodimer.

The protein resides in the cytoplasm. It carries out the reaction (2S,6S)-2,6-diaminopimelate = meso-2,6-diaminopimelate. The protein operates within amino-acid biosynthesis; L-lysine biosynthesis via DAP pathway; DL-2,6-diaminopimelate from LL-2,6-diaminopimelate: step 1/1. Catalyzes the stereoinversion of LL-2,6-diaminopimelate (L,L-DAP) to meso-diaminopimelate (meso-DAP), a precursor of L-lysine and an essential component of the bacterial peptidoglycan. The polypeptide is Diaminopimelate epimerase (Ralstonia pickettii (strain 12J)).